A 210-amino-acid polypeptide reads, in one-letter code: Na(+)-translocating NADH-quinone reductase subunit D (210 aa).

Transmembrane regions (helical) follow at residues 10–30 (VLIGPIVSNNPIALQILGVCS), 42–62 (LVMTIALTAVCALSNLFISLI), 72–92 (IIVQMTIIASLVIVVDQVLQA), 103–123 (VFVGLIITNCIVMGRAEAYAM), 131–151 (FMDGIGNGLGYGAILLSVGFV), and 178–198 (NGLLLLPPSAFFLIGALIWII).

Belongs to the NqrDE/RnfAE family. As to quaternary structure, composed of six subunits; NqrA, NqrB, NqrC, NqrD, NqrE and NqrF.

The protein resides in the cell inner membrane. The catalysed reaction is a ubiquinone + n Na(+)(in) + NADH + H(+) = a ubiquinol + n Na(+)(out) + NAD(+). NQR complex catalyzes the reduction of ubiquinone-1 to ubiquinol by two successive reactions, coupled with the transport of Na(+) ions from the cytoplasm to the periplasm. NqrA to NqrE are probably involved in the second step, the conversion of ubisemiquinone to ubiquinol. The chain is Na(+)-translocating NADH-quinone reductase subunit D from Shewanella pealeana (strain ATCC 700345 / ANG-SQ1).